Consider the following 385-residue polypeptide: MGNWLLPEGLADVLPAEARRIEELRRELLDLYRTYGFELVAPPLVEYIDSLLSSTGSDLNLRTCKLVDQLSGRTLGVRADMTSQVTRIDAHLLNRAGVTRLCYCGSVLHARPADLLSSRELLQIGAEIYGHAGFEADLEIIQLVMDTLATAGVRNARLDLCHSGVMRAIFDADPQASRHAGDLCTLLREKDVPGLAELASRVDGLGEDTVRALQALATLYGGPEIIARARRELPAVPGMAQALDALQALVDAMPGVTLSVDLADVGGYGYHSGVTFAVYGEDWHDALVRGGRYDDVSRAFGRARPATGFSLDLRKLAAGLTPAEPARAVRAPWGQDPALTDAVRRLRRSGEIVVQVLPGHEQGLDEFVCDRELALQDGAWTVRTL.

It belongs to the class-II aminoacyl-tRNA synthetase family. HisZ subfamily. As to quaternary structure, heteromultimer composed of HisG and HisZ subunits.

It is found in the cytoplasm. The protein operates within amino-acid biosynthesis; L-histidine biosynthesis; L-histidine from 5-phospho-alpha-D-ribose 1-diphosphate: step 1/9. Its function is as follows. Required for the first step of histidine biosynthesis. May allow the feedback regulation of ATP phosphoribosyltransferase activity by histidine. The chain is ATP phosphoribosyltransferase regulatory subunit from Bordetella parapertussis (strain 12822 / ATCC BAA-587 / NCTC 13253).